Reading from the N-terminus, the 121-residue chain is MTTSSPTATTAQAHGRFIRGSVSKVRRVLDQIRGRTYRDALIMLEFMPYRSTGPITKVLRSAVANAEHNLGLDPASLIISQATADMGPSMKRYRPRAQGRAYAIKKQTCHISIAVAAQTDS.

The protein belongs to the universal ribosomal protein uL22 family. In terms of assembly, part of the 50S ribosomal subunit.

Its function is as follows. This protein binds specifically to 23S rRNA; its binding is stimulated by other ribosomal proteins, e.g. L4, L17, and L20. It is important during the early stages of 50S assembly. It makes multiple contacts with different domains of the 23S rRNA in the assembled 50S subunit and ribosome. In terms of biological role, the globular domain of the protein is located near the polypeptide exit tunnel on the outside of the subunit, while an extended beta-hairpin is found that lines the wall of the exit tunnel in the center of the 70S ribosome. In Synechococcus sp. (strain CC9311), this protein is Large ribosomal subunit protein uL22.